The primary structure comprises 359 residues: Protein mab-21-like 2-A (359 aa).

The protein belongs to the mab-21 family.

It is found in the nucleus. The protein localises to the cytoplasm. Functionally, required for normal development of the eye. May promote dorsalization of the developing embryo by antagonizing the ventralizing factor bmp4. Functional antagonism of bmp4 may require interaction with smad1. Required for gastrulation and subsequent neural development. May function as a transcriptional repressor. This is Protein mab-21-like 2-A (mab21l2-a) from Xenopus laevis (African clawed frog).